The following is an 892-amino-acid chain: Alanine--tRNA ligase (892 aa).

Residues H574, H578, C676, and H680 each contribute to the Zn(2+) site.

Belongs to the class-II aminoacyl-tRNA synthetase family. It depends on Zn(2+) as a cofactor.

Its subcellular location is the cytoplasm. The enzyme catalyses tRNA(Ala) + L-alanine + ATP = L-alanyl-tRNA(Ala) + AMP + diphosphate. Catalyzes the attachment of alanine to tRNA(Ala) in a two-step reaction: alanine is first activated by ATP to form Ala-AMP and then transferred to the acceptor end of tRNA(Ala). Also edits incorrectly charged Ser-tRNA(Ala) and Gly-tRNA(Ala) via its editing domain. This is Alanine--tRNA ligase from Prochlorococcus marinus (strain MIT 9303).